Reading from the N-terminus, the 564-residue chain is MFS-type transporter kojT (564 aa).

Asparagine 113 carries an N-linked (GlcNAc...) asparagine glycan. 12 consecutive transmembrane segments (helical) span residues 120–140 (WATL…SSID), 159–179 (SLAT…AAPF), 187–207 (PVYI…GLAP), 217–237 (FLAG…MADI), 249–269 (VCCT…AFIG), 278–298 (WTEW…FLFV), 353–373 (IMVA…FGFL), 389–409 (GSVG…FAMV), 437–457 (LWFA…MGWT), 462–482 (ISYW…QGIF), 500–520 (ALVS…IVSI), and 530–550 (WSLT…YIFY).

This sequence belongs to the major facilitator superfamily.

The protein localises to the cell membrane. Functionally, MFS-type transporter; part of the gene cluster that mediates the biosynthesis of 5-hydroxy-2-hydroxymethyl-1,4-pyrone, also know as kojic acid, a by-product in the fermentation process of malting rice that acts as a chelation agent. Involved in the seretion of kojic acid. The sequence is that of MFS-type transporter kojT from Aspergillus flavus (strain ATCC 200026 / FGSC A1120 / IAM 13836 / NRRL 3357 / JCM 12722 / SRRC 167).